Consider the following 179-residue polypeptide: Large ribosomal subunit protein uL6 (179 aa).

This sequence belongs to the universal ribosomal protein uL6 family. Part of the 50S ribosomal subunit.

This protein binds to the 23S rRNA, and is important in its secondary structure. It is located near the subunit interface in the base of the L7/L12 stalk, and near the tRNA binding site of the peptidyltransferase center. This Clostridium perfringens (strain ATCC 13124 / DSM 756 / JCM 1290 / NCIMB 6125 / NCTC 8237 / Type A) protein is Large ribosomal subunit protein uL6.